The chain runs to 931 residues: MSASTHSHKRKNSHLFPQRKSSNSSMDKPFFPNNDSVANTDPQSNENGHTINEIRPTEATIDVTDVPQTPFLQEQYSMRPRRESFQFNDIENQHHTHSFFSVNKFNRRWGEWSLPEKRSYVLVFTLIALSVLVLLVILIPSKLLPTKITRPKTSAGDSSLGKRSFSIENVLNGDFAIPEDTFHFIDPPQRLLGQDSDPGLYFTTKEIDGHTNFIAKQLFDETFEVNLGGNRFLYEGVEFTVSTVQINYKLDKLIFGTNLESEFRHSSKGFYWIKDLNTGNIEPILPPEKSDDNYELGLSKLSYAHFSPAYNYIYFVYENNLFLQQVNSGVAKKVTEDGSKDIFNAKPDWIYEEEVLASDQAIWWAPDDSKAVFARFNDTSVDDIRLNRYTNMNEAYLSDTKIKYPKPGFQNPQFDLFLVNLQNGIIYSINTGGQKDSILYNGKWISPDTFRFEITDRNSKILDVKVYDIPSSQMLTVRNTNSNLFNGWIEKTKDILSIPPKPELKRMDYGYIDIHADSRGFSHLFYYPTVFAKEPIQLTKGNWEVTGNGIVGYEYETDTIFFTANEIGVMSQHLYSISLTDSTTQNTFQSLQNPSDKYDFYDFELSSSARYAISKKLGPDTPIKVAGPLTRVLNVAEIHDDSILQLTKDEKFKEKIKNYDLPITSYKTMVLDDGVEINYIEIKPANLNPKKKYPILVNIYGGPGSQTFTTKSSLAFEQAVVSGLDVIVLQIEPRGTGGKGWSFRSWAREKLGYWEPRDITEVTKKFIQRNSQHIDESKIAIWGWSYGGFTSLKTVELDNGDTFKYAMAVAPVTNWTLYDSVYTERYMNQPSENHEGYFEVSTIQNFKSFESLKRLFIVHGTFDDNVHIQNTFRLVDQLNLLGLTNYDMHIFPDSDHSIRYHNAQRIVFQKLYYWLRDAFAERFDNTEVLHL.

Basic residues predominate over residues 1–13; it reads MSASTHSHKRKNS. Residues 1–58 are disordered; it reads MSASTHSHKRKNSHLFPQRKSSNSSMDKPFFPNNDSVANTDPQSNENGHTINEIRPTE. Over 1–119 the chain is Cytoplasmic; it reads MSASTHSHKR…GEWSLPEKRS (119 aa). A compositionally biased stretch (polar residues) spans 33 to 50; that stretch reads NNDSVANTDPQSNENGHT. Residues 120–140 form a helical; Signal-anchor for type II membrane protein membrane-spanning segment; that stretch reads YVLVFTLIALSVLVLLVILIP. At 141 to 931 the chain is on the lumenal side; the sequence is SKLLPTKITR…RFDNTEVLHL (791 aa). Asn-377 carries N-linked (GlcNAc...) asparagine glycosylation. Ser-785 (charge relay system) is an active-site residue. A glycan (N-linked (GlcNAc...) asparagine) is linked at Asn-814. Catalysis depends on charge relay system residues Asp-863 and His-896.

This sequence belongs to the peptidase S9B family.

Its subcellular location is the vacuole membrane. Its function is as follows. Responsible for the proteolytic maturation of the alpha-factor precursor. This Saccharomyces cerevisiae (strain ATCC 204508 / S288c) (Baker's yeast) protein is Dipeptidyl aminopeptidase A (STE13).